A 430-amino-acid polypeptide reads, in one-letter code: Asparagine--tRNA ligase (430 aa).

This sequence belongs to the class-II aminoacyl-tRNA synthetase family. As to quaternary structure, homodimer.

The protein localises to the cytoplasm. It catalyses the reaction tRNA(Asn) + L-asparagine + ATP = L-asparaginyl-tRNA(Asn) + AMP + diphosphate + H(+). The polypeptide is Asparagine--tRNA ligase (Geobacillus thermodenitrificans (strain NG80-2)).